Consider the following 116-residue polypeptide: Flagellar transcriptional regulator FlhD (116 aa).

Belongs to the FlhD family. Homodimer; disulfide-linked. Forms a heterohexamer composed of two FlhC and four FlhD subunits. Each FlhC binds a FlhD dimer, forming a heterotrimer, and a hexamer assembles by dimerization of two heterotrimers.

It is found in the cytoplasm. Functionally, functions in complex with FlhC as a master transcriptional regulator that regulates transcription of several flagellar and non-flagellar operons by binding to their promoter region. Activates expression of class 2 flagellar genes, including fliA, which is a flagellum-specific sigma factor that turns on the class 3 genes. Also regulates genes whose products function in a variety of physiological pathways. This Pantoea ananatis (strain LMG 20103) protein is Flagellar transcriptional regulator FlhD.